Consider the following 177-residue polypeptide: Nucleoside triphosphate/diphosphate phosphatase (177 aa).

Residue Arg23 is the Proton donor of the active site. 6 residues coordinate Mg(2+): Asn87, Asp103, Asp105, Asp107, Asp120, and Glu123.

Belongs to the Ntdp family. Requires Mg(2+) as cofactor.

The enzyme catalyses a ribonucleoside 5'-triphosphate + H2O = a ribonucleoside 5'-diphosphate + phosphate + H(+). The catalysed reaction is a ribonucleoside 5'-diphosphate + H2O = a ribonucleoside 5'-phosphate + phosphate + H(+). Functionally, has nucleoside phosphatase activity towards nucleoside triphosphates and nucleoside diphosphates. This is Nucleoside triphosphate/diphosphate phosphatase from Streptococcus pneumoniae serotype 19F (strain G54).